The chain runs to 123 residues: Large ribosomal subunit protein bL17 (123 aa).

Belongs to the bacterial ribosomal protein bL17 family. As to quaternary structure, part of the 50S ribosomal subunit. Contacts protein L32.

The polypeptide is Large ribosomal subunit protein bL17 (Borreliella burgdorferi (strain ZS7) (Borrelia burgdorferi)).